The following is a 667-amino-acid chain: Single-minded homolog 2 (667 aa).

In terms of domain architecture, bHLH spans 1 to 53; the sequence is MKEKSKNAAKTRREKENGEFYELAKLLPLPSAITSQLDKASIIRLTTSYLKMR. PAS domains are found at residues 77-149 and 218-288; these read AKEL…LHHH and PPSA…LVKG. Positions 292-335 constitute a PAC domain; the sequence is TKYYRLLSKRGGWVWVQSYATVVHNSRSSRPHCIVSVNYVLTEI. The Single-minded C-terminal domain maps to 336-667; the sequence is EYKELQLSLE…GASVIITNGR (332 aa). 3 disordered regions span residues 356 to 389, 409 to 428, and 500 to 520; these read WRTALSTSQETRKLVKPKNTKMKTKLRTNPYPPQ, ASPPASAAAPPELQPHSESS, and SSSSPAKNPPEPPANTARHSL. The Nuclear localization signal motif lies at 367–386; it reads RKLVKPKNTKMKTKLRTNPY. The span at 369–381 shows a compositional bias: basic residues; that stretch reads LVKPKNTKMKTKL. Residues 409–419 are compositionally biased toward low complexity; sequence ASPPASAAAPP.

Efficient DNA binding requires dimerization with another bHLH protein. Heterodimer of SIM2 and ARNT.

It is found in the nucleus. Functionally, transcription factor that may be a master gene of CNS development in cooperation with Arnt. It may have pleiotropic effects in the tissues expressed during development. The polypeptide is Single-minded homolog 2 (SIM2) (Homo sapiens (Human)).